Here is a 368-residue protein sequence, read N- to C-terminus: tRNA(Met) cytidine acetate ligase (368 aa).

Residues 7 to 20, Gly-96, Asn-152, and Arg-175 each bind ATP; that span reads IAEF…HKYL.

This sequence belongs to the TmcAL family.

It localises to the cytoplasm. It carries out the reaction cytidine(34) in elongator tRNA(Met) + acetate + ATP = N(4)-acetylcytidine(34) in elongator tRNA(Met) + AMP + diphosphate. Catalyzes the formation of N(4)-acetylcytidine (ac(4)C) at the wobble position of elongator tRNA(Met), using acetate and ATP as substrates. First activates an acetate ion to form acetyladenylate (Ac-AMP) and then transfers the acetyl group to tRNA to form ac(4)C34. This chain is tRNA(Met) cytidine acetate ligase, found in Streptococcus pyogenes serotype M3 (strain SSI-1).